Consider the following 140-residue polypeptide: Putative pre-16S rRNA nuclease (140 aa).

The protein belongs to the YqgF nuclease family.

The protein resides in the cytoplasm. Its function is as follows. Could be a nuclease involved in processing of the 5'-end of pre-16S rRNA. In Vibrio vulnificus (strain YJ016), this protein is Putative pre-16S rRNA nuclease.